We begin with the raw amino-acid sequence, 236 residues long: Leucyl/phenylalanyl-tRNA--protein transferase (236 aa).

It belongs to the L/F-transferase family.

It localises to the cytoplasm. It catalyses the reaction N-terminal L-lysyl-[protein] + L-leucyl-tRNA(Leu) = N-terminal L-leucyl-L-lysyl-[protein] + tRNA(Leu) + H(+). It carries out the reaction N-terminal L-arginyl-[protein] + L-leucyl-tRNA(Leu) = N-terminal L-leucyl-L-arginyl-[protein] + tRNA(Leu) + H(+). The catalysed reaction is L-phenylalanyl-tRNA(Phe) + an N-terminal L-alpha-aminoacyl-[protein] = an N-terminal L-phenylalanyl-L-alpha-aminoacyl-[protein] + tRNA(Phe). Functions in the N-end rule pathway of protein degradation where it conjugates Leu, Phe and, less efficiently, Met from aminoacyl-tRNAs to the N-termini of proteins containing an N-terminal arginine or lysine. The protein is Leucyl/phenylalanyl-tRNA--protein transferase of Shewanella sp. (strain ANA-3).